Consider the following 383-residue polypeptide: Trichodiene synthase (383 aa).

The protein belongs to the trichodiene synthase family.

It catalyses the reaction (2E,6E)-farnesyl diphosphate = trichodiene + diphosphate. It functions in the pathway sesquiterpene biosynthesis; trichothecene biosynthesis. Functionally, TS is a member of the terpene cyclase group of enzymes. It catalyzes the isomerization and cyclization of farnesyl pyro-phosphate to form trichodiene, the first cyclic intermediate in the biosynthetic pathway for trichothecenes. It serves to branch trichothecene biosynthesis from the isoprenoid pathway. This is Trichodiene synthase (TRI5) from Gibberella pulicaris.